A 780-amino-acid chain; its full sequence is MAPYSLLVTRLQKALGVRQYHVASVLCQRAKVAMSHFEPSEYIRYDLLEKNINIVRKRLNRPLTLSEKIVYGHLDDPANQEIERGKTYLRLRPDRVAMQDATAQMAMLQFISSGLPKVAVPSTIHCDHLIEAQVGGEKDLRRAKDINQEVYNFLATAGAKYGVGFWRPGSGIIHQIILENYAYPGVLLIGTDSHTPNGGGLGGICIGVGGADAVDVMAGIPWELKCPKVIGVKLTGSLSGWTSPKDVILKVAGILTVKGGTGAIVEYHGPGVDSISCTGMATICNMGAEIGATTSVFPYNHRMKKYLSKTGRTDIANLAEEFKDHLVPDPGCQYDQVIEINLNELKPHINGPFTPDLAHPVADVGTVAEKEGWPLDIRVGLIGSCTNSSYEDMGRSAAVAKQALAHGLKCKSQFTITPGSEQIRATIERDGYAQILRDVGGIVLANACGPCIGQWDRKDIKKGEKNTIVTSYNRNFTGRNDANPETHAFVTSPEIVTALAIAGTLKFNPETDFLTGKDGKKFKLEAPDADELPRSDFDPGQDTYQHPPKDSSGQRVDVSPTSQRLQLLEPFDKWDGKDLEDLQILIKVKGKCTTDHISAAGPWLKFRGHLDNISNNLLIGAINIENGKANSVRNAVTQEFGPVPDTARYYKKHGIRWVVIGDENYGEGSSREHAALEPRHLGGRAIITKSFARIHETNLKKQGLLPLTFADPSDYNKIHPVDKLTIQGLKDFAPGKPLKCVIKHPNGTQETILLNHTFNETQIEWFRAGSALNRMKELQQ.

The transit peptide at 1-27 (MAPYSLLVTRLQKALGVRQYHVASVLC) directs the protein to the mitochondrion. Lys31 bears the N6-succinyllysine mark. An N6-acetyllysine; alternate modification is found at Lys50. Lys50 bears the N6-succinyllysine; alternate mark. Gln99 provides a ligand contact to substrate. Residues Lys138 and Lys144 each carry the N6-acetyllysine; alternate modification. N6-succinyllysine; alternate occurs at positions 138 and 144. 192–194 (DSH) provides a ligand contact to substrate. The residue at position 233 (Lys233) is an N6-acetyllysine; alternate. Lys233 bears the N6-succinyllysine; alternate mark. Position 385 (Cys385) interacts with [4Fe-4S] cluster. Position 411 is an N6-succinyllysine (Lys411). Positions 448 and 451 each coordinate [4Fe-4S] cluster. The substrate site is built by Arg474 and Arg479. Lys517 and Lys523 each carry N6-acetyllysine; alternate. Residues Lys517 and Lys523 each carry the N6-succinyllysine; alternate modification. Residues 524-537 (LEAPDADELPRSDF) are compositionally biased toward basic and acidic residues. The disordered stretch occupies residues 524–560 (LEAPDADELPRSDFDPGQDTYQHPPKDSSGQRVDVSP). Lys549 is modified (N6-succinyllysine). The segment covering 551–560 (SSGQRVDVSP) has biased composition (polar residues). The residue at position 559 (Ser559) is a Phosphoserine. N6-acetyllysine; alternate is present on Lys573. Position 573 is an N6-succinyllysine; alternate (Lys573). Residues Lys577 and Lys591 each carry the N6-succinyllysine modification. An N6-acetyllysine; alternate modification is found at Lys605. N6-succinyllysine; alternate is present on Lys605. Arg607 provides a ligand contact to substrate. Position 628 is an N6-succinyllysine (Lys628). Ser670 carries the post-translational modification Phosphoserine. 670 to 671 (SR) lines the substrate pocket. The residue at position 689 (Lys689) is an N6-succinyllysine. An N6-acetyllysine; alternate mark is found at Lys723 and Lys730. An N6-succinyllysine; alternate mark is found at Lys723 and Lys730. Residues Lys736, Lys739, and Lys743 each carry the N6-acetyllysine modification.

Belongs to the aconitase/IPM isomerase family. As to quaternary structure, monomer. [4Fe-4S] cluster is required as a cofactor. In terms of processing, forms covalent cross-links mediated by transglutaminase TGM2, between a glutamine and the epsilon-amino group of a lysine residue, forming homopolymers and heteropolymers.

Its subcellular location is the mitochondrion. The catalysed reaction is citrate = D-threo-isocitrate. The protein operates within carbohydrate metabolism; tricarboxylic acid cycle; isocitrate from oxaloacetate: step 2/2. Functionally, catalyzes the isomerization of citrate to isocitrate via cis-aconitate. This Mus musculus (Mouse) protein is Aconitate hydratase, mitochondrial (Aco2).